Consider the following 184-residue polypeptide: Ribosome maturation factor RimM (184 aa).

The PRC barrel domain maps to 93 to 165 (DEGWYEHELV…YILITPPSGL (73 aa)).

It belongs to the RimM family. Binds ribosomal protein uS19.

It is found in the cytoplasm. Its function is as follows. An accessory protein needed during the final step in the assembly of 30S ribosomal subunit, possibly for assembly of the head region. Essential for efficient processing of 16S rRNA. May be needed both before and after RbfA during the maturation of 16S rRNA. It has affinity for free ribosomal 30S subunits but not for 70S ribosomes. The protein is Ribosome maturation factor RimM of Paenarthrobacter aurescens (strain TC1).